An 843-amino-acid polypeptide reads, in one-letter code: Tetratricopeptide repeat protein 7B (843 aa).

Residues 97-131 (QESNLIMAKLNYVEGDYKEALNIYARVGLDDLPLT) form a TPR 1 repeat. Phosphoserine is present on residues Ser-160 and Ser-202. 6 TPR repeats span residues 219–252 (ETGL…VETR), 363–396 (SVVY…AFEE), 397–430 (FHLW…KPDD), 479–514 (TYSL…SPTD), 516–548 (QAAF…QGDD), and 549–582 (ANSL…YPEN). A phosphoserine mark is found at Ser-625, Ser-629, Ser-630, Ser-673, Ser-677, Ser-678, and Ser-681. TPR repeat units lie at residues 696–729 (AQIW…FPMS), 730–763 (HNVL…SPTH), 765–797 (KSMQ…NSTA), and 798–831 (HEVW…EASS).

In terms of assembly, component of a phosphatidylinositol 4-kinase (PI4K) complex, composed of PI4KA, EFR3 (EFR3A or EFR3B), TTC7 (TTC7A or TTC7B) and HYCC (HYCC1 or HYCC2). Interacts with PI4KA, interaction is direct. Interacts with EFR3 (EFR3A or EFR3B), interaction is direct. Interacts with HYCC (HYCC1 or HYCC2), interaction is direct. Association with the PI4K complex is strongly reduced by TMEM150A.

The protein localises to the cytoplasm. The protein resides in the cytosol. It is found in the cell membrane. In terms of biological role, component of a complex required to localize phosphatidylinositol 4-kinase (PI4K) to the plasma membrane. The complex acts as a regulator of phosphatidylinositol 4-phosphate (PtdIns(4)P) synthesis. In the complex, plays a central role in bridging PI4KA to EFR3B and HYCC1, via direct interactions. This chain is Tetratricopeptide repeat protein 7B (TTC7B), found in Homo sapiens (Human).